Consider the following 1053-residue polypeptide: Phosphoenolpyruvate carboxylase (1053 aa).

Residue H246 is part of the active site. Basic and acidic residues predominate over residues 461–473; sequence RNTRLQQQQEKDP. The interval 461 to 480 is disordered; sequence RNTRLQQQQEKDPTTPLPEY. K699 is an active-site residue.

It belongs to the PEPCase type 1 family. Mg(2+) serves as cofactor.

The catalysed reaction is oxaloacetate + phosphate = phosphoenolpyruvate + hydrogencarbonate. Forms oxaloacetate, a four-carbon dicarboxylic acid source for the tricarboxylic acid cycle. In Synechococcus sp. (strain ATCC 27144 / PCC 6301 / SAUG 1402/1) (Anacystis nidulans), this protein is Phosphoenolpyruvate carboxylase (ppc).